The chain runs to 269 residues: 3-methyl-2-oxobutanoate hydroxymethyltransferase (269 aa).

Mg(2+)-binding residues include D43 and D82. 3-methyl-2-oxobutanoate contacts are provided by residues 43–44 (DS), D82, and K110. Position 112 (E112) interacts with Mg(2+). E179 acts as the Proton acceptor in catalysis.

It belongs to the PanB family. Homodecamer; pentamer of dimers. Mg(2+) serves as cofactor.

It localises to the cytoplasm. It carries out the reaction 3-methyl-2-oxobutanoate + (6R)-5,10-methylene-5,6,7,8-tetrahydrofolate + H2O = 2-dehydropantoate + (6S)-5,6,7,8-tetrahydrofolate. Its pathway is cofactor biosynthesis; (R)-pantothenate biosynthesis; (R)-pantoate from 3-methyl-2-oxobutanoate: step 1/2. Functionally, catalyzes the reversible reaction in which hydroxymethyl group from 5,10-methylenetetrahydrofolate is transferred onto alpha-ketoisovalerate to form ketopantoate. The protein is 3-methyl-2-oxobutanoate hydroxymethyltransferase of Acinetobacter baylyi (strain ATCC 33305 / BD413 / ADP1).